Consider the following 330-residue polypeptide: Transcription factor TGA6 (330 aa).

Residues 1 to 13 (MADTSSRTDVSTD) are compositionally biased toward polar residues. The disordered stretch occupies residues 1-45 (MADTSSRTDVSTDGDTDHRDLGSDRGHMHAAASDSSDRSKDKLDQ). 2 stretches are compositionally biased toward basic and acidic residues: residues 15-27 (DTDH…DRGH) and 35-45 (SSDRSKDKLDQ). Residues 44–107 (DQKTLRRLAQ…SSGDQAHSTG (64 aa)) enclose the bZIP domain. Coiled-coil stretches lie at residues 45 to 142 (QKTL…HAGD) and 217 to 233 (INSL…ALSQ). Positions 46 to 66 (KTLRRLAQNREAARKSRLRKK) are basic motif. The interval 72 to 86 (LENSRLKLTQLEQEL) is leucine-zipper. The DOG1 domain maps to 111–327 (ALAFDAEHSR…RALSSLWLAR (217 aa)).

The protein belongs to the bZIP family. Binds DNA as a dimer. Interacts with NPR1, NPR3 and NPR4. Interacts with GRXC9/GRX480. Expressed predominantly in roots and flowers.

The protein localises to the nucleus. In terms of biological role, transcriptional activator that binds specifically to the DNA sequence 5'-TGACG-3'. Recognizes ocs elements like the as-1 motif of the cauliflower mosaic virus 35S promoter. Binding to the as-1-like cis elements mediate auxin- and salicylic acid-inducible transcription. May be involved in the induction of the systemic acquired resistance (SAR) via its interaction with NPR1. Could also bind to the Hex-motif (5'-TGACGTGG-3') another cis-acting element found in plant histone promoters. The sequence is that of Transcription factor TGA6 (TGA6) from Arabidopsis thaliana (Mouse-ear cress).